We begin with the raw amino-acid sequence, 319 residues long: Probable ABC transporter permease protein MG189 homolog (319 aa).

6 helical membrane passes run 41-61 (VVLC…LVVA), 98-118 (AIWI…FFTV), 134-154 (LFWF…LIGQ), 169-189 (PAII…GFMF), 229-249 (TVSI…LLLL), and 282-302 (NLKM…YFLF). Residues 99–302 (IWINSLVTIL…LPMFIVYFLF (204 aa)) enclose the ABC transmembrane type-1 domain.

Belongs to the binding-protein-dependent transport system permease family. MalFG subfamily.

The protein resides in the cell membrane. Its function is as follows. Probably part of a binding-protein-dependent transport system. Probably responsible for the translocation of the substrate across the membrane. The polypeptide is Probable ABC transporter permease protein MG189 homolog (Mycoplasma pneumoniae (strain ATCC 29342 / M129 / Subtype 1) (Mycoplasmoides pneumoniae)).